Consider the following 417-residue polypeptide: MFSFYFNDNKITKLLMVGYGSTGKSVCDFLANFIDITVDISQNDDEFVNYDLGSYDLITVSPGIPLNKSPYRVLTKFKDKIVSDIDIFYQYIKDTKAKTIAVTGSNGKSTVVTMTDFVLKDLGYKSILVGNIGTPALNKIGEKFDYCVVEVSSFQIDLFNCVRFDLGCIINVSPDHLDRYQNFEQYKQSKLNLAKFSNDFFVYDVHNNGIKYAGEYQIIRGAIYRNSTKLLDIAETKLFGEHNLENIIVVLNILDRLGLDINQAIDSIKKFKGLEHRCKIVKKVNGTTYINDSKGTNVGATIAALNSITNSKNIILLLGGVAKGGDFSLMIKSLDKYVKYVYIYGADKEYIESYIKGYCKYQLCNNMKQAFELASQKANSNEIVLLSPACASFDEFSGYAQRGEVFQNLVAQLEQKS.

104–110 (GSNGKST) is a binding site for ATP.

This sequence belongs to the MurCDEF family.

The protein localises to the cytoplasm. The enzyme catalyses UDP-N-acetyl-alpha-D-muramoyl-L-alanine + D-glutamate + ATP = UDP-N-acetyl-alpha-D-muramoyl-L-alanyl-D-glutamate + ADP + phosphate + H(+). It participates in cell wall biogenesis; peptidoglycan biosynthesis. Its function is as follows. Cell wall formation. Catalyzes the addition of glutamate to the nucleotide precursor UDP-N-acetylmuramoyl-L-alanine (UMA). The chain is UDP-N-acetylmuramoylalanine--D-glutamate ligase from Francisella tularensis subsp. novicida (strain U112).